A 405-amino-acid chain; its full sequence is L-carnitine CoA-transferase (405 aa).

CoA is bound by residues Lys-97 and Arg-104. The active-site Nucleophile is Asp-169.

This sequence belongs to the CoA-transferase III family. CaiB subfamily. As to quaternary structure, homodimer.

It localises to the cytoplasm. It catalyses the reaction crotonobetainyl-CoA + (R)-carnitine = crotonobetaine + (R)-carnitinyl-CoA. The enzyme catalyses 4-(trimethylamino)butanoyl-CoA + (R)-carnitine = (R)-carnitinyl-CoA + 4-(trimethylamino)butanoate. The protein operates within amine and polyamine metabolism; carnitine metabolism. Its function is as follows. Catalyzes the reversible transfer of the CoA moiety from gamma-butyrobetainyl-CoA to L-carnitine to generate L-carnitinyl-CoA and gamma-butyrobetaine. Is also able to catalyze the reversible transfer of the CoA moiety from gamma-butyrobetainyl-CoA or L-carnitinyl-CoA to crotonobetaine to generate crotonobetainyl-CoA. This is L-carnitine CoA-transferase from Shigella flexneri serotype 5b (strain 8401).